The following is a 149-amino-acid chain: NPC intracellular cholesterol transporter 2 (149 aa).

The first 21 residues, Met-1–Ala-21, serve as a signal peptide directing secretion. 3 disulfide bridges follow: Cys-27/Cys-140, Cys-42/Cys-47, and Cys-93/Cys-99. Residue Asn-58 is glycosylated (N-linked (GlcNAc...) asparagine). An N6-acetyllysine modification is found at Lys-116.

This sequence belongs to the NPC2 family. As to quaternary structure, interacts with NPC1 (via the second lumenal domain) in a cholestrol-dependent manner. Interacts with NUS1/NgBR, the interaction stabilizes NCP2 and regulates cholesterol trafficking. Interacts with DHDDS. Interacts with NEDD4L (via C2 domain). Interacts with NPC1L1. Epididymis. High levels are found in the caput and corpus regions. Weaker levels in the distal cauda and in the efferent ducts.

The protein resides in the secreted. The protein localises to the endoplasmic reticulum. Its subcellular location is the lysosome. It carries out the reaction cholesterol(in) = cholesterol(out). In terms of biological role, intracellular cholesterol transporter which acts in concert with NPC1 and plays an important role in the egress of cholesterol from the lysosomal compartment. Unesterified cholesterol that has been released from LDLs in the lumen of the late endosomes/lysosomes is transferred by NPC2 to the cholesterol-binding pocket in the N-terminal domain of NPC1. May bind and mobilize cholesterol that is associated with membranes. NPC2 binds cholesterol with a 1:1 stoichiometry. Can bind a variety of sterols, including lathosterol, desmosterol and the plant sterols stigmasterol and beta-sitosterol. The secreted form of NCP2 regulates biliary cholesterol secretion via stimulation of ABCG5/ABCG8-mediated cholesterol transport. This is NPC intracellular cholesterol transporter 2 from Canis lupus familiaris (Dog).